Here is a 397-residue protein sequence, read N- to C-terminus: Protein shisa-8 (397 aa).

The first 38 residues, 1–38 (MARAGARGLLGGRRPPGLRLALALRLALLLARPPSGRA), serve as a signal peptide directing secretion. Residues 39–138 (GAPEAQGPAA…APRDPGRERS (100 aa)) are Extracellular-facing. Asn-75 carries N-linked (GlcNAc...) asparagine glycosylation. The disordered stretch occupies residues 117–136 (TGRPPARARDTAAPRDPGRE). The span at 123–136 (RARDTAAPRDPGRE) shows a compositional bias: basic and acidic residues. A helical transmembrane segment spans residues 139-159 (HTAVYAVCGVAALLVLAGIGA). Residues 160 to 397 (RLGLERAHSP…RTNSKTEVTV (238 aa)) are Cytoplasmic-facing. 2 disordered regions span residues 182–250 (LLKQ…GGSL) and 281–303 (FPALEPSPRQPPARAPRPSPDLP). 2 stretches are compositionally biased toward pro residues: residues 188 to 197 (PQEPLPPTLG) and 288 to 303 (PRQPPARAPRPSPDLP).

It belongs to the shisa family. In terms of assembly, interacts with AMPAR subunits GRIA1 and GRIA2.

It localises to the membrane. Functionally, may regulate trafficking and current kinetics of AMPA-type glutamate receptor (AMPAR) at synapses. In Homo sapiens (Human), this protein is Protein shisa-8.